Here is a 101-residue protein sequence, read N- to C-terminus: Small ribosomal subunit protein uS14 (101 aa).

This sequence belongs to the universal ribosomal protein uS14 family. In terms of assembly, part of the 30S ribosomal subunit. Contacts proteins S3 and S10.

Its function is as follows. Binds 16S rRNA, required for the assembly of 30S particles and may also be responsible for determining the conformation of the 16S rRNA at the A site. In Chromobacterium violaceum (strain ATCC 12472 / DSM 30191 / JCM 1249 / CCUG 213 / NBRC 12614 / NCIMB 9131 / NCTC 9757 / MK), this protein is Small ribosomal subunit protein uS14.